Reading from the N-terminus, the 92-residue chain is MGRSLKKGPFIADSLLKKVEKQNTDNDKSVIKTWSRSSTILPLMIGHTIAVHNGKTHIPVFITEQMIGHKLGEFAPTRTYRGHIRDKKGAKS.

Belongs to the universal ribosomal protein uS19 family.

In terms of biological role, protein S19 forms a complex with S13 that binds strongly to the 16S ribosomal RNA. This is Small ribosomal subunit protein uS19 from Prochlorococcus marinus (strain MIT 9301).